The following is a 248-amino-acid chain: Triosephosphate isomerase (248 aa).

Residue Asn9–Lys11 coordinates substrate. The Electrophile role is filled by His93. The Proton acceptor role is filled by Glu163. Residues Gly169, Ser208, and Gly229–Gly230 contribute to the substrate site.

It belongs to the triosephosphate isomerase family. As to quaternary structure, homodimer.

Its subcellular location is the cytoplasm. It catalyses the reaction D-glyceraldehyde 3-phosphate = dihydroxyacetone phosphate. It participates in carbohydrate biosynthesis; gluconeogenesis. It functions in the pathway carbohydrate degradation; glycolysis; D-glyceraldehyde 3-phosphate from glycerone phosphate: step 1/1. In terms of biological role, involved in the gluconeogenesis. Catalyzes stereospecifically the conversion of dihydroxyacetone phosphate (DHAP) to D-glyceraldehyde-3-phosphate (G3P). The protein is Triosephosphate isomerase of Jannaschia sp. (strain CCS1).